A 344-amino-acid chain; its full sequence is Small neutral protease regulatory protein (344 aa).

An HTH lysR-type domain is found at 1-60; it reads MELEVRHLRALCAIADAGSLHRAARRLGVAQPTLSTQLTRIEQALGGPLFTRERTGCRPT. Residues 20–39 constitute a DNA-binding region (H-T-H motif); the sequence is LHRAARRLGVAQPTLSTQLT. The disordered stretch occupies residues 322–344; sequence SCGRAEGSRSRRPRDVAPPRPIG. Positions 327–338 are enriched in basic and acidic residues; the sequence is EGSRSRRPRDVA.

It belongs to the LysR transcriptional regulatory family.

Functionally, transcriptional activator of the gene (snpA) for the small neutral protease. The chain is Small neutral protease regulatory protein (mprR) from Streptomyces lividans.